The following is a 231-amino-acid chain: Large ribosomal subunit protein uL1 (231 aa).

The protein belongs to the universal ribosomal protein uL1 family. As to quaternary structure, part of the 50S ribosomal subunit.

Binds directly to 23S rRNA. The L1 stalk is quite mobile in the ribosome, and is involved in E site tRNA release. Its function is as follows. Protein L1 is also a translational repressor protein, it controls the translation of the L11 operon by binding to its mRNA. The sequence is that of Large ribosomal subunit protein uL1 from Clostridium kluyveri (strain NBRC 12016).